The chain runs to 95 residues: Co-chaperonin GroES (95 aa).

Belongs to the GroES chaperonin family. Heptamer of 7 subunits arranged in a ring. Interacts with the chaperonin GroEL.

It is found in the cytoplasm. Its function is as follows. Together with the chaperonin GroEL, plays an essential role in assisting protein folding. The GroEL-GroES system forms a nano-cage that allows encapsulation of the non-native substrate proteins and provides a physical environment optimized to promote and accelerate protein folding. GroES binds to the apical surface of the GroEL ring, thereby capping the opening of the GroEL channel. This is Co-chaperonin GroES from Pseudoalteromonas translucida (strain TAC 125).